We begin with the raw amino-acid sequence, 241 residues long: 2,3-bisphosphoglycerate-dependent phosphoglycerate mutase (241 aa).

H12 serves as the catalytic Tele-phosphohistidine intermediate. Substrate contacts are provided by residues 24–25 (SG), R61, 117–120 (ERYY), and K128. Catalysis depends on E117, which acts as the Proton donor/acceptor.

It belongs to the phosphoglycerate mutase family. BPG-dependent PGAM subfamily.

It carries out the reaction (2R)-2-phosphoglycerate = (2R)-3-phosphoglycerate. Its pathway is carbohydrate degradation; glycolysis; pyruvate from D-glyceraldehyde 3-phosphate: step 3/5. Functionally, catalyzes the interconversion of 2-phosphoglycerate and 3-phosphoglycerate. This is 2,3-bisphosphoglycerate-dependent phosphoglycerate mutase from Methanosarcina mazei (strain ATCC BAA-159 / DSM 3647 / Goe1 / Go1 / JCM 11833 / OCM 88) (Methanosarcina frisia).